Reading from the N-terminus, the 487-residue chain is Acetyl-coenzyme A carboxylase carboxyl transferase subunit beta, chloroplastic (487 aa).

The region spanning 223–487 is the CoA carboxyltransferase N-terminal domain; that stretch reads LWVQCENCYG…LHAFFPLNQN (265 aa). Zn(2+) is bound by residues Cys-227, Cys-230, Cys-246, and Cys-249. Residues 227–249 form a C4-type zinc finger; it reads CENCYGLNYKKSFKSKMNLCEQC.

Belongs to the AccD/PCCB family. In terms of assembly, acetyl-CoA carboxylase is a heterohexamer composed of biotin carboxyl carrier protein, biotin carboxylase and 2 subunits each of ACCase subunit alpha and ACCase plastid-coded subunit beta (accD). Zn(2+) serves as cofactor.

The protein resides in the plastid. It localises to the chloroplast stroma. It catalyses the reaction N(6)-carboxybiotinyl-L-lysyl-[protein] + acetyl-CoA = N(6)-biotinyl-L-lysyl-[protein] + malonyl-CoA. The protein operates within lipid metabolism; malonyl-CoA biosynthesis; malonyl-CoA from acetyl-CoA: step 1/1. In terms of biological role, component of the acetyl coenzyme A carboxylase (ACC) complex. Biotin carboxylase (BC) catalyzes the carboxylation of biotin on its carrier protein (BCCP) and then the CO(2) group is transferred by the transcarboxylase to acetyl-CoA to form malonyl-CoA. The polypeptide is Acetyl-coenzyme A carboxylase carboxyl transferase subunit beta, chloroplastic (Panax ginseng (Korean ginseng)).